The following is a 704-amino-acid chain: Glycine--tRNA ligase beta subunit (704 aa).

The protein belongs to the class-II aminoacyl-tRNA synthetase family. As to quaternary structure, tetramer of two alpha and two beta subunits.

Its subcellular location is the cytoplasm. It carries out the reaction tRNA(Gly) + glycine + ATP = glycyl-tRNA(Gly) + AMP + diphosphate. The chain is Glycine--tRNA ligase beta subunit from Rhizobium johnstonii (strain DSM 114642 / LMG 32736 / 3841) (Rhizobium leguminosarum bv. viciae).